The sequence spans 292 residues: MNRLKLLVKAPAKINLSLDVLGKRQDGYHEVKMIMTTIDLADRLELMELAEDRIEILSHNRYVPDDQRNLAYQAAKLLKEKFNVKKGVSITIEKTIPVAAGLAGGSSDAAATLRGLNKLWNLGLTIDQLAELGAEIGSDVSFCVYGGTAIATGRGEQIEHIKTPPSCWVILAKPHIGVSTADVYGNLKLNRVTHPNVDKMVDVINAGDYKGICDTVGNVLEDVTFAMHPEVARIKAQMKRFGADAVLMSGSGPTVFGLVHHDSRMHRIYNGLKGFCEQVYAVRLLGERETLE.

K13 is a catalytic residue. 97-107 (PVAAGLAGGSS) provides a ligand contact to ATP. D139 is a catalytic residue.

This sequence belongs to the GHMP kinase family. IspE subfamily.

The catalysed reaction is 4-CDP-2-C-methyl-D-erythritol + ATP = 4-CDP-2-C-methyl-D-erythritol 2-phosphate + ADP + H(+). It participates in isoprenoid biosynthesis; isopentenyl diphosphate biosynthesis via DXP pathway; isopentenyl diphosphate from 1-deoxy-D-xylulose 5-phosphate: step 3/6. Its function is as follows. Catalyzes the phosphorylation of the position 2 hydroxy group of 4-diphosphocytidyl-2C-methyl-D-erythritol. This chain is 4-diphosphocytidyl-2-C-methyl-D-erythritol kinase, found in Bacillus thuringiensis (strain Al Hakam).